A 694-amino-acid chain; its full sequence is MQTNPNMFLNRELSWLRFNSRVLDQCSRPLPLLERLKFVAIYCTNLDEFYMIRVAGLKQLFSAGVNISSSDEMSPLQQLKAIRKYLHKEKDLLEHYFNEIISDLEKENLFIKNYENLDNNLKQKVYEYFFSTIFPVIVPIAVDATHPFPHLNNLSFSLAVNICDNTHPELIKFGMIRIPRVLPRFYEVSANVYVPIESIVEKHTEEIFPGYKLLTSAAFRVTRNADMVIEEEEADDFMMILEQGLKLRRKGAFVRLQIQKGADEQIVEFLNTHMKIFHKDVYEYSILLNLPSLWQIAGNKTFTHLLSPLYTPKTLPPFDENLSIFDAIDKEDILIIQPFESFDPVYKFIKEASKDPEVISIRMTLYRVEKNSNIVQALIGAASAGIQVTVMVELKARFDEENNLHWAKALENAGAHVIYGITGFKVHAKVSQVIRKKGDKLKFYMHLSTGNYNASSAKIYTDVSYFTSKVEFARDTTSFFHILSGFSKNRRLQTLSMSPNQIKEKILEMIALEASKGSEGVIIAKMNSLVDSDIIKALYEASIKGTQIDLIVRGIFCLKPNEEFSKNILVRSIIGKYLEHARVFYFKHSEPNYFISSADWMPRNLERRLELMTPIYDERSKAKLAQFLRLQLSDNLLAYELQNDGEYAKVASNEKVIDSQQILEEYVSKIYKTLKKDTDQSRATHLASKLFKEN.

Asparagine 45 is an ATP binding site. Mg(2+) contacts are provided by arginine 367 and arginine 397. The Phosphohistidine intermediate role is filled by histidine 427. ATP contacts are provided by tyrosine 460, arginine 553, and histidine 580.

Belongs to the polyphosphate kinase 1 (PPK1) family. It depends on Mg(2+) as a cofactor. In terms of processing, an intermediate of this reaction is the autophosphorylated ppk in which a phosphate is covalently linked to a histidine residue through a N-P bond.

It catalyses the reaction [phosphate](n) + ATP = [phosphate](n+1) + ADP. Its function is as follows. Catalyzes the reversible transfer of the terminal phosphate of ATP to form a long-chain polyphosphate (polyP). This chain is Polyphosphate kinase, found in Campylobacter coli.